The following is a 377-amino-acid chain: Alanine racemase, catabolic (377 aa).

Residue lysine 51 is the Proton acceptor; specific for D-alanine of the active site. N6-(pyridoxal phosphate)lysine is present on lysine 51. Arginine 150 contacts substrate. The Proton acceptor; specific for L-alanine role is filled by tyrosine 272. Methionine 320 lines the substrate pocket.

Belongs to the alanine racemase family. Pyridoxal 5'-phosphate serves as cofactor.

The catalysed reaction is L-alanine = D-alanine. Functionally, isomerizes L-alanine to D-alanine which is then oxidized to pyruvate by DadA. The polypeptide is Alanine racemase, catabolic (dadX) (Rhizobium johnstonii (strain DSM 114642 / LMG 32736 / 3841) (Rhizobium leguminosarum bv. viciae)).